The following is a 142-amino-acid chain: MKTFTAKPETVKRDWYVVDATGKTLGRLATELARRLRGKHKAEYTPHVDTGDYIIVLNADKVAVTGNKRTDKVYYHHTGHIGGIKQATFEEMIARRPERVIEIAVKGMLPKGPLGRAMFRKLKVYAGNEHNHAAQQPQVLDI.

It belongs to the universal ribosomal protein uL13 family. As to quaternary structure, part of the 50S ribosomal subunit.

Functionally, this protein is one of the early assembly proteins of the 50S ribosomal subunit, although it is not seen to bind rRNA by itself. It is important during the early stages of 50S assembly. The polypeptide is Large ribosomal subunit protein uL13 (Salmonella agona (strain SL483)).